Consider the following 998-residue polypeptide: Probable protein kinase DDB_G0277539 (998 aa).

Disordered regions lie at residues 1-34 (MDFP…DFDQ), 65-207 (CEDQ…TNEF), 265-284 (INNN…FSSS), 316-367 (SNGS…NYSS), 380-420 (ERTN…PNSI), and 435-489 (RLQS…NNNN). Acidic residues predominate over residues 23 to 32 (YDDDDDDDDF). Residues 70 to 139 (QQQQQQSSSP…NNNNNNNNNN (70 aa)) show a composition bias toward low complexity. Residues 140–150 (SHHHHLRKGRR) show a composition bias toward basic residues. Polar residues predominate over residues 166-177 (ASLSSTKTNMFP). 2 stretches are compositionally biased toward low complexity: residues 184–203 (SSPS…QSQQ) and 265–274 (INNNYNNNNN). Over residues 316-328 (SNGSYNKGNTFPS) the composition is skewed to polar residues. A compositionally biased stretch (basic and acidic residues) spans 330-340 (EVKRVRPDQRA). Composition is skewed to low complexity over residues 393–415 (NVNN…NNNN) and 450–489 (NNNN…NNNN). Positions 508–849 (FQELDLIGEG…AEQLLEHPLI (342 aa)) constitute a Protein kinase domain. ATP is bound by residues 514–522 (IGEGSFGHV) and K537. D631 acts as the Proton acceptor in catalysis. Mg(2+) is bound by residues N636 and E677.

It belongs to the protein kinase superfamily. Ser/Thr protein kinase family. WEE1 subfamily.

It catalyses the reaction L-seryl-[protein] + ATP = O-phospho-L-seryl-[protein] + ADP + H(+). The catalysed reaction is L-threonyl-[protein] + ATP = O-phospho-L-threonyl-[protein] + ADP + H(+). The chain is Probable protein kinase DDB_G0277539 from Dictyostelium discoideum (Social amoeba).